Consider the following 405-residue polypeptide: Sarcosine oxidase subunit beta (405 aa).

The FAD site is built by Gly-31, His-32, Glu-53, Asn-61, Met-62, Thr-66, and Ile-68. His-173 is subject to Tele-8alpha-FMN histidine. Residues Val-197, Gly-354, Gly-357, and Lys-359 each coordinate FAD.

This sequence belongs to the SoxB family. In terms of assembly, heterotetramer composed of subunits alpha (SoxA), beta (SoxB), gamma (SoxG) and delta (SoxD). The cofactor is FAD. It depends on FMN as a cofactor.

The protein resides in the cytoplasm. It carries out the reaction sarcosine + (6S)-5,6,7,8-tetrahydrofolate + O2 = (6R)-5,10-methylene-5,6,7,8-tetrahydrofolate + glycine + H2O2. The catalysed reaction is sarcosine + O2 + H2O = formaldehyde + glycine + H2O2. Its function is as follows. In the presence of tetrahydrofolate, catalyzes the oxidative demethylation of sarcosine to yield glycine, 5,10-methylenetetrahydrofolate and hydrogen peroxide. In the absence of tetrahydrofolate, catalyzes the oxidative demethylation of sarcosine to yield glycine, formaldehyde and hydrogen peroxide. This chain is Sarcosine oxidase subunit beta (soxB), found in Arthrobacter sp.